The chain runs to 188 residues: Xanthine phosphoribosyltransferase (188 aa).

Positions 20 and 27 each coordinate xanthine. 127–131 (ANGNA) contributes to the 5-phospho-alpha-D-ribose 1-diphosphate binding site. Lysine 155 is a xanthine binding site.

This sequence belongs to the purine/pyrimidine phosphoribosyltransferase family. Xpt subfamily. In terms of assembly, homodimer.

It is found in the cytoplasm. The catalysed reaction is XMP + diphosphate = xanthine + 5-phospho-alpha-D-ribose 1-diphosphate. It participates in purine metabolism; XMP biosynthesis via salvage pathway; XMP from xanthine: step 1/1. In terms of biological role, converts the preformed base xanthine, a product of nucleic acid breakdown, to xanthosine 5'-monophosphate (XMP), so it can be reused for RNA or DNA synthesis. The polypeptide is Xanthine phosphoribosyltransferase (Phocaeicola vulgatus (strain ATCC 8482 / DSM 1447 / JCM 5826 / CCUG 4940 / NBRC 14291 / NCTC 11154) (Bacteroides vulgatus)).